The chain runs to 221 residues: F-box protein At1g55000 (221 aa).

The 40-residue stretch at 7–46 folds into the F-box domain; sequence DTLIIIFQKLTVADLARASCVCKVWNSVATEDDLVVSAFT. A LysM domain is found at 74 to 118; sequence ISHRICRGDSVTSLAVKYAVQVMDIKRLNNMMSDHGIYSRDRLLI.

In terms of assembly, part of a SCF (ASK-cullin-F-box) protein ligase complex. Interacts with SKP1A/ASK1, SKP1B/ASK2, ASK4, ASK11 and ASK13.

Its pathway is protein modification; protein ubiquitination. Component of SCF(ASK-cullin-F-box) E3 ubiquitin ligase complexes, which may mediate the ubiquitination and subsequent proteasomal degradation of target proteins. The chain is F-box protein At1g55000 from Arabidopsis thaliana (Mouse-ear cress).